The chain runs to 345 residues: Protein RecA (345 aa).

ATP is bound at residue 63–70; sequence GPESSGKT. Residues 326-345 form a disordered region; that stretch reads VLSDALMTDPEPDADGTPED. The span at 335–345 shows a compositional bias: acidic residues; the sequence is PEPDADGTPED.

The protein belongs to the RecA family.

The protein resides in the cytoplasm. Its function is as follows. Can catalyze the hydrolysis of ATP in the presence of single-stranded DNA, the ATP-dependent uptake of single-stranded DNA by duplex DNA, and the ATP-dependent hybridization of homologous single-stranded DNAs. It interacts with LexA causing its activation and leading to its autocatalytic cleavage. The polypeptide is Protein RecA (Gluconobacter oxydans (strain 621H) (Gluconobacter suboxydans)).